The following is a 257-amino-acid chain: Putative hydro-lyase YcsI (257 aa).

This sequence belongs to the D-glutamate cyclase family.

The sequence is that of Putative hydro-lyase YcsI (ycsI) from Bacillus subtilis (strain 168).